The following is a 151-amino-acid chain: MKHVDIFTDGACSGNPGPGGWGAVLRYGEVEKELCGGEAETTNNRMELMAAISALQALKSPCEVDLYTDSAYVKDGISKWIFGWKKNGWKTSDKKPVKNAELWQALEEARNRHKVTLHWVKGHAGHPENERADELARRGMEPFKKGKAVSF.

The RNase H type-1 domain maps to 1–141; that stretch reads MKHVDIFTDG…ADELARRGME (141 aa). The Mg(2+) site is built by aspartate 9, glutamate 47, aspartate 69, and aspartate 133.

Belongs to the RNase H family. In terms of assembly, monomer. Requires Mg(2+) as cofactor.

It localises to the cytoplasm. It carries out the reaction Endonucleolytic cleavage to 5'-phosphomonoester.. In terms of biological role, endonuclease that specifically degrades the RNA of RNA-DNA hybrids. The polypeptide is Ribonuclease H (Rhizobium etli (strain ATCC 51251 / DSM 11541 / JCM 21823 / NBRC 15573 / CFN 42)).